The sequence spans 249 residues: Segregation and condensation protein A (249 aa).

The protein belongs to the ScpA family. Component of a cohesin-like complex composed of ScpA, ScpB and the Smc homodimer, in which ScpA and ScpB bind to the head domain of Smc. The presence of the three proteins is required for the association of the complex with DNA.

It localises to the cytoplasm. Functionally, participates in chromosomal partition during cell division. May act via the formation of a condensin-like complex containing Smc and ScpB that pull DNA away from mid-cell into both cell halves. This Oceanobacillus iheyensis (strain DSM 14371 / CIP 107618 / JCM 11309 / KCTC 3954 / HTE831) protein is Segregation and condensation protein A.